The following is a 327-amino-acid chain: Undecaprenyl-phosphate 4-deoxy-4-formamido-L-arabinose transferase (327 aa).

The next 2 helical transmembrane spans lie at I233 to I253 and V268 to L288.

Belongs to the glycosyltransferase 2 family.

The protein resides in the cell inner membrane. The catalysed reaction is UDP-4-deoxy-4-formamido-beta-L-arabinose + di-trans,octa-cis-undecaprenyl phosphate = 4-deoxy-4-formamido-alpha-L-arabinopyranosyl di-trans,octa-cis-undecaprenyl phosphate + UDP. It participates in glycolipid biosynthesis; 4-amino-4-deoxy-alpha-L-arabinose undecaprenyl phosphate biosynthesis; 4-amino-4-deoxy-alpha-L-arabinose undecaprenyl phosphate from UDP-4-deoxy-4-formamido-beta-L-arabinose and undecaprenyl phosphate: step 1/2. The protein operates within bacterial outer membrane biogenesis; lipopolysaccharide biosynthesis. Its function is as follows. Catalyzes the transfer of 4-deoxy-4-formamido-L-arabinose from UDP to undecaprenyl phosphate. The modified arabinose is attached to lipid A and is required for resistance to polymyxin and cationic antimicrobial peptides. This is Undecaprenyl-phosphate 4-deoxy-4-formamido-L-arabinose transferase from Pectobacterium atrosepticum (strain SCRI 1043 / ATCC BAA-672) (Erwinia carotovora subsp. atroseptica).